A 104-amino-acid polypeptide reads, in one-letter code: Small ribosomal subunit protein bS18c (104 aa).

A disordered region spans residues aspartate 84 to lysine 104.

It belongs to the bacterial ribosomal protein bS18 family. Part of the 30S ribosomal subunit.

Its subcellular location is the plastid. It is found in the chloroplast. This chain is Small ribosomal subunit protein bS18c, found in Cucumis sativus (Cucumber).